The chain runs to 346 residues: MARHPRWTLSQVTELFGKPLLELLFEAQQIHRQHFDPQQVQVSTLLSIKTGACPEDCKYCPQSSRYKTGLEAERLMEVEQVLDSARKAKNAGSTRFCMGAAWRNPHERDMPYLEKIVQGVKAMGLETCMTLGMLNESQAQRLANAGLDYYNHNLDTSPEFYGNIITTRTYQERLDTLEKVREAGIKVCSGGIVGLGETVTDRAGLLLQLANLPTPPESVPINMLVKVKGTPLADNDDVDAFDFIRTIAVARIMMPTSYVRLSAGREQMNEQTQAMCFMAGANSIFYGCKLLTTPNPAEDKDLQLFRKLGLNPQQTRVLAGDNEQQQRLEQTLMTPDTDDYYNAAAL.

The 219-residue stretch at 38–256 folds into the Radical SAM core domain; the sequence is QQVQVSTLLS…IAVARIMMPT (219 aa). 3 residues coordinate [4Fe-4S] cluster: cysteine 53, cysteine 57, and cysteine 60. Residues cysteine 97, cysteine 128, cysteine 188, and arginine 260 each coordinate [2Fe-2S] cluster.

Belongs to the radical SAM superfamily. Biotin synthase family. In terms of assembly, homodimer. [4Fe-4S] cluster is required as a cofactor. [2Fe-2S] cluster serves as cofactor.

The enzyme catalyses (4R,5S)-dethiobiotin + (sulfur carrier)-SH + 2 reduced [2Fe-2S]-[ferredoxin] + 2 S-adenosyl-L-methionine = (sulfur carrier)-H + biotin + 2 5'-deoxyadenosine + 2 L-methionine + 2 oxidized [2Fe-2S]-[ferredoxin]. It functions in the pathway cofactor biosynthesis; biotin biosynthesis; biotin from 7,8-diaminononanoate: step 2/2. Functionally, catalyzes the conversion of dethiobiotin (DTB) to biotin by the insertion of a sulfur atom into dethiobiotin via a radical-based mechanism. This is Biotin synthase from Salmonella choleraesuis (strain SC-B67).